A 277-amino-acid polypeptide reads, in one-letter code: Putative phosphoenolpyruvate synthase regulatory protein (277 aa).

157-164 (GVSRCGKT) contributes to the ADP binding site.

Belongs to the pyruvate, phosphate/water dikinase regulatory protein family. PSRP subfamily.

The catalysed reaction is [pyruvate, water dikinase] + ADP = [pyruvate, water dikinase]-phosphate + AMP + H(+). It carries out the reaction [pyruvate, water dikinase]-phosphate + phosphate + H(+) = [pyruvate, water dikinase] + diphosphate. Functionally, bifunctional serine/threonine kinase and phosphorylase involved in the regulation of the phosphoenolpyruvate synthase (PEPS) by catalyzing its phosphorylation/dephosphorylation. The chain is Putative phosphoenolpyruvate synthase regulatory protein from Photobacterium profundum (strain SS9).